A 460-amino-acid polypeptide reads, in one-letter code: Light-independent protochlorophyllide reductase subunit N (460 aa).

Residues C20, C45, and C105 each contribute to the [4Fe-4S] cluster site.

It belongs to the BchN/ChlN family. As to quaternary structure, protochlorophyllide reductase is composed of three subunits; ChlL, ChlN and ChlB. Forms a heterotetramer of two ChlB and two ChlN subunits. Requires [4Fe-4S] cluster as cofactor.

It localises to the plastid. The protein localises to the chloroplast. The catalysed reaction is chlorophyllide a + oxidized 2[4Fe-4S]-[ferredoxin] + 2 ADP + 2 phosphate = protochlorophyllide a + reduced 2[4Fe-4S]-[ferredoxin] + 2 ATP + 2 H2O. It functions in the pathway porphyrin-containing compound metabolism; chlorophyll biosynthesis (light-independent). Component of the dark-operative protochlorophyllide reductase (DPOR) that uses Mg-ATP and reduced ferredoxin to reduce ring D of protochlorophyllide (Pchlide) to form chlorophyllide a (Chlide). This reaction is light-independent. The NB-protein (ChlN-ChlB) is the catalytic component of the complex. The sequence is that of Light-independent protochlorophyllide reductase subunit N from Adiantum capillus-veneris (Maidenhair fern).